The chain runs to 105 residues: Large ribosomal subunit protein uL24 (105 aa).

The protein belongs to the universal ribosomal protein uL24 family. As to quaternary structure, part of the 50S ribosomal subunit.

In terms of biological role, one of two assembly initiator proteins, it binds directly to the 5'-end of the 23S rRNA, where it nucleates assembly of the 50S subunit. Functionally, one of the proteins that surrounds the polypeptide exit tunnel on the outside of the subunit. This chain is Large ribosomal subunit protein uL24, found in Nitrosospira multiformis (strain ATCC 25196 / NCIMB 11849 / C 71).